The sequence spans 195 residues: Pyridoxal 5'-phosphate synthase subunit PdxT (195 aa).

46–48 (GES) is an L-glutamine binding site. C78 serves as the catalytic Nucleophile. Residues R107 and 136 to 137 (IR) each bind L-glutamine. Active-site charge relay system residues include H173 and E175.

Belongs to the glutaminase PdxT/SNO family. In the presence of PdxS, forms a dodecamer of heterodimers. Only shows activity in the heterodimer.

The catalysed reaction is aldehydo-D-ribose 5-phosphate + D-glyceraldehyde 3-phosphate + L-glutamine = pyridoxal 5'-phosphate + L-glutamate + phosphate + 3 H2O + H(+). It catalyses the reaction L-glutamine + H2O = L-glutamate + NH4(+). It functions in the pathway cofactor biosynthesis; pyridoxal 5'-phosphate biosynthesis. Catalyzes the hydrolysis of glutamine to glutamate and ammonia as part of the biosynthesis of pyridoxal 5'-phosphate. The resulting ammonia molecule is channeled to the active site of PdxS. In Dehalococcoides mccartyi (strain ATCC BAA-2266 / KCTC 15142 / 195) (Dehalococcoides ethenogenes (strain 195)), this protein is Pyridoxal 5'-phosphate synthase subunit PdxT.